The following is a 156-amino-acid chain: Cyanate hydratase (156 aa).

Catalysis depends on residues R96, E99, and S122.

The protein belongs to the cyanase family.

It carries out the reaction cyanate + hydrogencarbonate + 3 H(+) = NH4(+) + 2 CO2. Functionally, catalyzes the reaction of cyanate with bicarbonate to produce ammonia and carbon dioxide. In Pseudomonas aeruginosa (strain UCBPP-PA14), this protein is Cyanate hydratase.